The sequence spans 348 residues: Neuronal growth regulator 1 (348 aa).

A signal peptide spans 1–31; that stretch reads MVLLAQGACCSNQWLAAVLLSLCSCLPAGQS. Ig-like C2-type domains follow at residues 32–128, 133–215, and 219–307; these read VDFP…VHLT, PKIY…RVVV, and PTIQ…LPLN. Cysteines 54 and 112 form a disulfide. N-linked (GlcNAc...) asparagine glycosylation is found at N67 and N149. 2 cysteine pairs are disulfide-bonded: C154/C197 and C239/C291. Y181 is modified (phosphotyrosine). N-linked (GlcNAc...) asparagine glycosylation is found at N269, N280, N288, and N301. G318 is lipidated: GPI-anchor amidated glycine. The propeptide at 319–348 is removed in mature form; it reads SACDLFSCWSLALTLSSVISIFYLKNAILQ.

Belongs to the immunoglobulin superfamily. IgLON family. Glycosylated. As to expression, highly expressed in brain.

The protein resides in the cell membrane. May be involved in cell-adhesion. May function as a trans-neural growth-promoting factor in regenerative axon sprouting in the mammalian brain. The chain is Neuronal growth regulator 1 (Negr1) from Rattus norvegicus (Rat).